Here is a 128-residue protein sequence, read N- to C-terminus: Small ribosomal subunit protein uS8c (128 aa).

This sequence belongs to the universal ribosomal protein uS8 family. Part of the 30S ribosomal subunit.

The protein resides in the plastid. It is found in the chloroplast. In terms of biological role, one of the primary rRNA binding proteins, it binds directly to 16S rRNA central domain where it helps coordinate assembly of the platform of the 30S subunit. The sequence is that of Small ribosomal subunit protein uS8c (rps8) from Gnetum parvifolium (Small-leaved jointfir).